The primary structure comprises 134 residues: Cytochrome b5 isoform E (134 aa).

A Cytochrome b5 heme-binding domain is found at 5–81; sequence RKVLSFEEVS…MDKYFIGEID (77 aa). Positions 40 and 64 each coordinate heme. The chain crosses the membrane as a helical span at residues 107–127; the sequence is FIIKILQFLVPILILGLALVV. The AKR2A-binding sequence (ABS) required for endoplasmic reticulum membrane targeting motif lies at 128–134; it reads RHYTKKD.

It belongs to the cytochrome b5 family. As to quaternary structure, interacts with CER1, BI-1, FAH1 and FAH2. Interacts with AKR2A. As to expression, expressed in roots, stems, leaves, flowers and siliques.

The protein localises to the cell membrane. The protein resides in the endoplasmic reticulum membrane. Its function is as follows. Membrane bound hemoprotein which function as an electron carrier for several membrane bound oxygenases, including fatty acid desaturases. The chain is Cytochrome b5 isoform E (CYTB5-E) from Arabidopsis thaliana (Mouse-ear cress).